A 566-amino-acid chain; its full sequence is Peroxisomal targeting signal receptor (566 aa).

Residue cysteine 5 forms a Glycyl cysteine thioester (Cys-Gly) (interchain with G-Cter in ubiquitin) linkage. An amphipathic helix 1 (AH1) region spans residues 6–28 (SVGSNPLAQLNKHAQQNPALRQV). A Glycyl lysine isopeptide (Lys-Gly) (interchain with G-Cter in ubiquitin) cross-link involves residue lysine 17. Residues 53–71 (RFQMDQFMNRSPGFSDGQL) form an amphipathic helix 2 (AH2) region. The disordered stretch occupies residues 88–159 (GLKKQDSGSS…IGRPMMHTGI (72 aa)). Over residues 94–142 (SGSSNMSAGDTAQHSRSWGNEFNSRSPQQGLASRVNNVERISNTNSMSS) the composition is skewed to polar residues. A WxxxF/Y motif 1 motif is present at residues 111 to 115 (WGNEF). The interval 145–151 (PGMSRIG) is amphipathic helix 3 (AH3). The WxxxF/Y motif 2 motif lies at 187–191 (WNEQF). The amphipathic helix 4 (AH4) stretch occupies residues 225–241 (FQEVWDKLQAETADNNL). Positions 248–252 (WEKDY) match the WxxxF/Y motif 3 motif. TPR repeat units follow at residues 277–311 (NPNAYEIGCILMENGAKLSEAALAFEAAVQEDPAH), 312–345 (VDAWLKLGLVQTQNEKEMNGISALEQCLSLDPTN), 416–449 (PEVQLGLGTLFYANEEFGKTIDCFRTALEVNPND), 451–483 (LMWNRLGASLANSNRSEEAIQAYHKALALKPSF), and 485–517 (RARYNLAISSMNIGCYKEAAESLLSALSMHEVE).

This sequence belongs to the peroxisomal targeting signal receptor family. In terms of assembly, interacts (via WxxxF/Y and LVxEF motifs) with PEX14; promoting translocation through the PEX13-PEX14 docking complex. Monoubiquitinated at Cys-5 by PEX2 during PEX5 passage through the retrotranslocation channel: monoubiquitination acts as a signal for PEX5 extraction and is required for proper export from peroxisomes and recycling. When PEX5 recycling is compromised, polyubiquitinated at Lys-17 by PEX10 during its passage through the retrotranslocation channel, leading to its degradation.

Its subcellular location is the cytoplasm. It localises to the cytosol. The protein resides in the peroxisome matrix. In terms of biological role, receptor that mediates peroxisomal import of proteins containing a C-terminal PTS1-type tripeptide peroxisomal targeting signal (SKL-type). Binds to cargo proteins containing a PTS1 peroxisomal targeting signal in the cytosol, and translocates them into the peroxisome matrix by passing through the PEX13-PEX14 docking complex along with cargo proteins. PEX5 receptor is then retrotranslocated into the cytosol, leading to release of bound cargo in the peroxisome matrix, and reset for a subsequent peroxisome import cycle. In Kluyveromyces lactis (strain ATCC 8585 / CBS 2359 / DSM 70799 / NBRC 1267 / NRRL Y-1140 / WM37) (Yeast), this protein is Peroxisomal targeting signal receptor (PEX5).